A 255-amino-acid chain; its full sequence is BPI fold-containing family A member 1 (255 aa).

A signal peptide spans 1–19 (MFHIGSLVVLCGLLAPTTA). The segment at 87-92 (LLGSLL) is important for surfactant activity and antibacterial properties. Residues asparagine 157, asparagine 178, and asparagine 205 are each glycosylated (N-linked (GlcNAc...) asparagine). A disulfide bridge links cysteine 179 with cysteine 223.

It belongs to the BPI/LBP/Plunc superfamily. Plunc family. Monomer. Interacts (via N-terminus) with SCNN1B, a subunit of the heterotrimeric epithelial sodium channel (ENaC); this inhibits proteolytic activation of ENaC. Expressed in trachea, and at lower levels in nasal epithelium.

It is found in the secreted. Functionally, lipid-binding protein which shows high specificity for the surfactant phospholipid dipalmitoylphosphatidylcholine (DPPC). Plays a role in the innate immune responses of the upper airways. Reduces the surface tension in secretions from airway epithelia and inhibits the formation of biofilm by pathogenic Gram-negative bacteria, such as P.aeruginosa and K.pneumoniae. Negatively regulates proteolytic cleavage of SCNN1G, an event that is required for activation of the epithelial sodium channel (ENaC), and thereby contributes to airway surface liquid homeostasis and proper clearance of mucus. Plays a role in the airway inflammatory response after exposure to irritants. May attract macrophages and neutrophils. In Bos taurus (Bovine), this protein is BPI fold-containing family A member 1 (BPIFA1).